Reading from the N-terminus, the 457-residue chain is tRNA-2-methylthio-N(6)-dimethylallyladenosine synthase (457 aa).

Residues 3 to 120 (KKVYVKTFGC…LPQMIDARRE (118 aa)) enclose the MTTase N-terminal domain. Positions 12, 49, 83, 157, 161, and 164 each coordinate [4Fe-4S] cluster. Residues 143 to 377 (RVEGPSAFVS…QATIEENVAR (235 aa)) form the Radical SAM core domain. The TRAM domain maps to 380-447 (QSMLGKVERI…PHSLRGELVL (68 aa)).

Belongs to the methylthiotransferase family. MiaB subfamily. Monomer. It depends on [4Fe-4S] cluster as a cofactor.

Its subcellular location is the cytoplasm. It catalyses the reaction N(6)-dimethylallyladenosine(37) in tRNA + (sulfur carrier)-SH + AH2 + 2 S-adenosyl-L-methionine = 2-methylsulfanyl-N(6)-dimethylallyladenosine(37) in tRNA + (sulfur carrier)-H + 5'-deoxyadenosine + L-methionine + A + S-adenosyl-L-homocysteine + 2 H(+). Functionally, catalyzes the methylthiolation of N6-(dimethylallyl)adenosine (i(6)A), leading to the formation of 2-methylthio-N6-(dimethylallyl)adenosine (ms(2)i(6)A) at position 37 in tRNAs that read codons beginning with uridine. The sequence is that of tRNA-2-methylthio-N(6)-dimethylallyladenosine synthase from Burkholderia thailandensis (strain ATCC 700388 / DSM 13276 / CCUG 48851 / CIP 106301 / E264).